The sequence spans 163 residues: Phosphopantetheine adenylyltransferase (163 aa).

A substrate-binding site is contributed by threonine 10. ATP-binding positions include 10–11 and histidine 18; that span reads TF. Residues lysine 42, leucine 74, and arginine 88 each contribute to the substrate site. Residues 89-91, glutamate 99, and 124-130 contribute to the ATP site; these read GLR and NSFISST.

Belongs to the bacterial CoaD family. As to quaternary structure, homohexamer. It depends on Mg(2+) as a cofactor.

The protein resides in the cytoplasm. It carries out the reaction (R)-4'-phosphopantetheine + ATP + H(+) = 3'-dephospho-CoA + diphosphate. Its pathway is cofactor biosynthesis; coenzyme A biosynthesis; CoA from (R)-pantothenate: step 4/5. In terms of biological role, reversibly transfers an adenylyl group from ATP to 4'-phosphopantetheine, yielding dephospho-CoA (dPCoA) and pyrophosphate. The chain is Phosphopantetheine adenylyltransferase from Shewanella baltica (strain OS223).